A 322-amino-acid polypeptide reads, in one-letter code: Undecaprenyl-phosphate 4-deoxy-4-formamido-L-arabinose transferase (322 aa).

Over 1-235 the chain is Cytoplasmic; that stretch reads MFEIHPVKKV…TCLTTTPLRM (235 aa). Residues 236–256 traverse the membrane as a helical segment; the sequence is LSLLGSIIAIGGFSIAVLLVI. Topologically, residues 257 to 269 are periplasmic; that stretch reads LRLTFGPQWAAEG. The helical transmembrane segment at 270 to 290 threads the bilayer; it reads VFMLFAVLFTFIGAQFIGMGL. Residues 291–322 are Cytoplasmic-facing; that stretch reads LGEYIGRIYTDVRARPRYFVQQVIRPSSKENE.

This sequence belongs to the glycosyltransferase 2 family.

Its subcellular location is the cell inner membrane. It catalyses the reaction UDP-4-deoxy-4-formamido-beta-L-arabinose + di-trans,octa-cis-undecaprenyl phosphate = 4-deoxy-4-formamido-alpha-L-arabinopyranosyl di-trans,octa-cis-undecaprenyl phosphate + UDP. Its pathway is glycolipid biosynthesis; 4-amino-4-deoxy-alpha-L-arabinose undecaprenyl phosphate biosynthesis; 4-amino-4-deoxy-alpha-L-arabinose undecaprenyl phosphate from UDP-4-deoxy-4-formamido-beta-L-arabinose and undecaprenyl phosphate: step 1/2. It participates in bacterial outer membrane biogenesis; lipopolysaccharide biosynthesis. Catalyzes the transfer of 4-deoxy-4-formamido-L-arabinose from UDP to undecaprenyl phosphate. The modified arabinose is attached to lipid A and is required for resistance to polymyxin and cationic antimicrobial peptides. In Escherichia coli (strain SMS-3-5 / SECEC), this protein is Undecaprenyl-phosphate 4-deoxy-4-formamido-L-arabinose transferase.